Consider the following 337-residue polypeptide: PHD finger protein 11 (337 aa).

A C2HC pre-PHD-type zinc finger spans residues 25–61 (KRTCALCPEGHEWSQIYFSPSGNIVAHENCLLYSSGL). The segment at 91 to 143 (LKCSFCNKGGATVGCDLWFCKKSYHYVCAKKDQAILQVDGNHGTYKLFCPEHS) adopts a PHD-type zinc-finger fold. Disordered regions lie at residues 145 to 196 (EQEE…HGHT) and 301 to 337 (GDLD…GDSL). The segment covering 187-196 (HMTEEPHGHT) has biased composition (basic and acidic residues). 2 stretches are compositionally biased toward polar residues: residues 301 to 312 (GDLDCSSSTSGS) and 323 to 337 (SQES…GDSL).

In terms of assembly, interacts with BRCA1 and RELA.

The protein localises to the nucleus. Its function is as follows. Positive regulator of Th1-type cytokine gene expression. The chain is PHD finger protein 11 (Phf11) from Mus musculus (Mouse).